The primary structure comprises 208 residues: LexA repressor (208 aa).

Positions 28–48 form a DNA-binding region, H-T-H motif; that stretch reads RAEIARQLGFRSANAAEEHLK. Active-site for autocatalytic cleavage activity residues include Ser125 and Lys162.

This sequence belongs to the peptidase S24 family. As to quaternary structure, homodimer.

It carries out the reaction Hydrolysis of Ala-|-Gly bond in repressor LexA.. In terms of biological role, represses a number of genes involved in the response to DNA damage (SOS response), including recA and lexA. In the presence of single-stranded DNA, RecA interacts with LexA causing an autocatalytic cleavage which disrupts the DNA-binding part of LexA, leading to derepression of the SOS regulon and eventually DNA repair. The chain is LexA repressor from Alteromonas mediterranea (strain DSM 17117 / CIP 110805 / LMG 28347 / Deep ecotype).